The chain runs to 153 residues: Large ribosomal subunit protein uL22 (153 aa).

It belongs to the universal ribosomal protein uL22 family. In terms of assembly, part of the 50S ribosomal subunit.

This protein binds specifically to 23S rRNA. It makes multiple contacts with different domains of the 23S rRNA in the assembled 50S subunit and ribosome. In terms of biological role, the globular domain of the protein is located near the polypeptide exit tunnel on the outside of the subunit, while an extended beta-hairpin is found that lines the wall of the exit tunnel in the center of the 70S ribosome. The sequence is that of Large ribosomal subunit protein uL22 from Methanococcus maripaludis (strain DSM 14266 / JCM 13030 / NBRC 101832 / S2 / LL).